Reading from the N-terminus, the 410-residue chain is UPF0761 membrane protein Csal_1895 (410 aa).

A run of 6 helical transmembrane segments spans residues 43 to 63, 99 to 119, 139 to 159, 180 to 200, 212 to 232, and 247 to 267; these read LFAV…IPSF, SLTL…MVTV, FLLY…GFLL, VAFL…FIYM, AVAG…AFSL, and FAAV…VLVG.

This sequence belongs to the UPF0761 family.

The protein resides in the cell inner membrane. The chain is UPF0761 membrane protein Csal_1895 from Chromohalobacter salexigens (strain ATCC BAA-138 / DSM 3043 / CIP 106854 / NCIMB 13768 / 1H11).